The following is a 902-amino-acid chain: Nitrate reductase [NADPH] (902 aa).

Residue Cys182 coordinates Mo-molybdopterin. Residues 537-612 (LPLIFADEVA…LKKYCIGRCS (76 aa)) enclose the Cytochrome b5 heme-binding domain. Heme contacts are provided by His572 and His595. The 115-residue stretch at 637–751 (RTKVPIVLIS…KGPLGHFTYY (115 aa)) folds into the FAD-binding FR-type domain. Residues 689 to 692 (RAYT), 708 to 712 (LIKVY), Phe713, 725 to 727 (LFS), and Thr778 each bind FAD. Residue 872–879 (CMCGPEGM) coordinates NADP(+).

The protein belongs to the nitrate reductase family. In terms of assembly, homodimer. FAD serves as cofactor. It depends on heme as a cofactor. The cofactor is Mo-molybdopterin.

The enzyme catalyses nitrite + NADP(+) + H2O = nitrate + NADPH + H(+). Functionally, nitrate reductase is a key enzyme involved in the first step of nitrate assimilation in plants, fungi and bacteria. The chain is Nitrate reductase [NADPH] (NIAA) from Phytophthora infestans (Potato late blight agent).